An 836-amino-acid chain; its full sequence is RNA-binding protein 12B-A (836 aa).

The 76-residue stretch at 154-229 (PYLFLRGLPY…RFIEVMQGSE (76 aa)) folds into the RRM 1 domain. Residues 237 to 277 (GTATEGGDTPRMRSEEHSPSRRINGRHFRKRSHSKSPRARS) are disordered. The segment covering 244 to 255 (DTPRMRSEEHSP) has biased composition (basic and acidic residues). Basic residues predominate over residues 259–277 (INGRHFRKRSHSKSPRARS). RRM domains follow at residues 283-359 (FYVH…PVSR) and 401-478 (LCIY…LISE). Disordered stretches follow at residues 539-572 (GHFK…PWEE) and 620-644 (SQEH…RRSR). The span at 550–572 (QSDRRSPEDFRHSPEDYRHPWEE) shows a compositional bias: basic and acidic residues. Position 703 is a phosphoserine (S703). K758 carries the post-translational modification N6-acetyllysine. In terms of domain architecture, RRM 4 spans 760–836 (IPVKISNLPF…GPRKVKLSLL (77 aa)).

In Mus musculus (Mouse), this protein is RNA-binding protein 12B-A (Rbm12b1).